The following is a 247-amino-acid chain: ATP synthase subunit a, chloroplastic (247 aa).

Helical transmembrane passes span 38–58 (QVLITSWVVITILLGSVVIAV), 95–115 (VPFIGTMFLFIFVSNWSGALL), 134–154 (INTTVALALLTSAAYFYAGLS), 199–219 (LVVVVLVSLVPLVVPIPVMFL), and 220–240 (GLFTSGIQALIFATLAAAYIG).

Belongs to the ATPase A chain family. F-type ATPases have 2 components, CF(1) - the catalytic core - and CF(0) - the membrane proton channel. CF(1) has five subunits: alpha(3), beta(3), gamma(1), delta(1), epsilon(1). CF(0) has four main subunits: a, b, b' and c.

The protein resides in the plastid. It localises to the chloroplast thylakoid membrane. Functionally, key component of the proton channel; it plays a direct role in the translocation of protons across the membrane. The protein is ATP synthase subunit a, chloroplastic of Agrostis stolonifera (Creeping bentgrass).